The sequence spans 364 residues: D-alanine--D-alanine ligase (364 aa).

The ATP-grasp domain occupies 141 to 346 (KNLFAQAGLR…YSELIERLIA (206 aa)). Residue 174–229 (EQELGYPCFVKPANAGSSVGISKCKQRDDLKTAFAEAFKYDRKIIIEESIVGREIE) coordinates ATP. Positions 300, 313, and 315 each coordinate Mg(2+).

This sequence belongs to the D-alanine--D-alanine ligase family. The cofactor is Mg(2+). Mn(2+) is required as a cofactor.

The protein resides in the cytoplasm. It carries out the reaction 2 D-alanine + ATP = D-alanyl-D-alanine + ADP + phosphate + H(+). It functions in the pathway cell wall biogenesis; peptidoglycan biosynthesis. Functionally, cell wall formation. This chain is D-alanine--D-alanine ligase, found in Geobacillus thermodenitrificans (strain NG80-2).